We begin with the raw amino-acid sequence, 565 residues long: SRSF protein kinase 3 (565 aa).

A disordered region spans residues 1 to 44 (MSANAGGSGSVDCGGSSSSSQTSCGPESSGSELTPATPAPRLLQ). Positions 10–31 (SVDCGGSSSSSQTSCGPESSGS) are enriched in low complexity. A Phosphoserine modification is found at S49. In terms of domain architecture, Protein kinase spans 78 to 563 (YHVVRKLGWG…AADCLQHPWL (486 aa)). Residues 84-92 (LGWGHFSTV) and K107 contribute to the ATP site. D211 acts as the Proton acceptor in catalysis. The span at 236–253 (WQQSGAQPPSRSTVSTAP) shows a compositional bias: polar residues. 2 disordered regions span residues 236–280 (WQQS…KRLL) and 295–350 (AAVQ…QTSG). Residues 262–277 (SKNKRKKMRRKRKQQK) show a composition bias toward basic residues. Over residues 325–350 (AGPSPASSSPVPGGERSLSPSSQTSG) the composition is skewed to low complexity. S328 is subject to Phosphoserine.

Belongs to the protein kinase superfamily. CMGC Ser/Thr protein kinase family. Exclusively expressed in skeletal and heart muscle.

The protein resides in the nucleus. Its subcellular location is the cytoplasm. It catalyses the reaction L-seryl-[protein] + ATP = O-phospho-L-seryl-[protein] + ADP + H(+). The catalysed reaction is L-threonyl-[protein] + ATP = O-phospho-L-threonyl-[protein] + ADP + H(+). Its function is as follows. Serine/arginine-rich protein-specific kinase which specifically phosphorylates its substrates at serine residues located in regions rich in arginine/serine dipeptides, known as RS domains. Phosphorylates the SR splicing factor SRSF1 and the lamin-B receptor (LBR) in vitro. Required for normal muscle development. This is SRSF protein kinase 3 (Srpk3) from Mus musculus (Mouse).